Consider the following 256-residue polypeptide: Hydroxyacylglutathione hydrolase (256 aa).

Zn(2+)-binding residues include His58, His60, Asp62, His63, His116, Asp135, and His173.

This sequence belongs to the metallo-beta-lactamase superfamily. Glyoxalase II family. As to quaternary structure, monomer. Zn(2+) is required as a cofactor.

The catalysed reaction is an S-(2-hydroxyacyl)glutathione + H2O = a 2-hydroxy carboxylate + glutathione + H(+). Its pathway is secondary metabolite metabolism; methylglyoxal degradation; (R)-lactate from methylglyoxal: step 2/2. Its function is as follows. Thiolesterase that catalyzes the hydrolysis of S-D-lactoyl-glutathione to form glutathione and D-lactic acid. The polypeptide is Hydroxyacylglutathione hydrolase (Hyphomonas neptunium (strain ATCC 15444)).